The primary structure comprises 196 residues: ATP synthase subunit b 2 (196 aa).

The span at 1–18 (MVVAQAGAPAHPPAAHGA) shows a compositional bias: low complexity. Residues 1–33 (MVVAQAGAPAHPPAAHGAEAGHGEAAGGEHGGF) form a disordered region. Residues 41–60 (FASQLIWLIVSFGALYFLMS) form a helical membrane-spanning segment.

This sequence belongs to the ATPase B chain family. As to quaternary structure, F-type ATPases have 2 components, F(1) - the catalytic core - and F(0) - the membrane proton channel. F(1) has five subunits: alpha(3), beta(3), gamma(1), delta(1), epsilon(1). F(0) has three main subunits: a(1), b(2) and c(10-14). The alpha and beta chains form an alternating ring which encloses part of the gamma chain. F(1) is attached to F(0) by a central stalk formed by the gamma and epsilon chains, while a peripheral stalk is formed by the delta and b chains.

The protein localises to the cell inner membrane. Functionally, f(1)F(0) ATP synthase produces ATP from ADP in the presence of a proton or sodium gradient. F-type ATPases consist of two structural domains, F(1) containing the extramembraneous catalytic core and F(0) containing the membrane proton channel, linked together by a central stalk and a peripheral stalk. During catalysis, ATP synthesis in the catalytic domain of F(1) is coupled via a rotary mechanism of the central stalk subunits to proton translocation. Component of the F(0) channel, it forms part of the peripheral stalk, linking F(1) to F(0). The b'-subunit is a diverged and duplicated form of b found in plants and photosynthetic bacteria. This Azorhizobium caulinodans (strain ATCC 43989 / DSM 5975 / JCM 20966 / LMG 6465 / NBRC 14845 / NCIMB 13405 / ORS 571) protein is ATP synthase subunit b 2 (atpF2).